The following is a 345-amino-acid chain: tRNA pseudouridine synthase B (345 aa).

The interval 1–33 (MGGNSQPHQEPRRVNNDPRAKQQKGNQVRRDRR) is disordered. Over residues 9 to 20 (QEPRRVNNDPRA) the composition is skewed to basic and acidic residues. The active-site Nucleophile is D72.

Belongs to the pseudouridine synthase TruB family. Type 1 subfamily.

The catalysed reaction is uridine(55) in tRNA = pseudouridine(55) in tRNA. Functionally, responsible for synthesis of pseudouridine from uracil-55 in the psi GC loop of transfer RNAs. The chain is tRNA pseudouridine synthase B from Bradyrhizobium diazoefficiens (strain JCM 10833 / BCRC 13528 / IAM 13628 / NBRC 14792 / USDA 110).